A 216-amino-acid chain; its full sequence is Uracil phosphoribosyltransferase (216 aa).

GTP-binding positions include Arg32, Arg41, 75-78, and Lys77; that span reads MGKI. Ser82 is modified (phosphoserine). 5-phospho-alpha-D-ribose 1-diphosphate is bound at residue Arg85. Arg102 is a binding site for GTP. Residue Arg110 participates in 5-phospho-alpha-D-ribose 1-diphosphate binding. Arg131 is a GTP binding site. 5-phospho-alpha-D-ribose 1-diphosphate contacts are provided by residues Asp137 and 137–145; that span reads DPMLATGGS. D-ribose 5-phosphate is bound at residue Tyr201. Uracil contacts are provided by residues Leu202 and 207-209; that span reads GDF. Asp208 contacts 5-phospho-alpha-D-ribose 1-diphosphate.

This sequence belongs to the UPRTase family. It depends on Mg(2+) as a cofactor.

It catalyses the reaction UMP + diphosphate = 5-phospho-alpha-D-ribose 1-diphosphate + uracil. The protein operates within pyrimidine metabolism; UMP biosynthesis via salvage pathway; UMP from uracil: step 1/1. Allosterically activated by GTP. Its function is as follows. Catalyzes the conversion of uracil and 5-phospho-alpha-D-ribose 1-diphosphate (PRPP) to UMP and diphosphate in the pyrimidine salvage pathway. The polypeptide is Uracil phosphoribosyltransferase (FUR1) (Saccharomyces cerevisiae (strain ATCC 204508 / S288c) (Baker's yeast)).